The following is a 464-amino-acid chain: Glutamate--tRNA ligase (464 aa).

The short motif at 9–19 (PSPTGYLHIGG) is the 'HIGH' region element. The 'KMSKS' region motif lies at 242 to 246 (KISKR). K245 provides a ligand contact to ATP.

This sequence belongs to the class-I aminoacyl-tRNA synthetase family. Glutamate--tRNA ligase type 1 subfamily. In terms of assembly, monomer.

The protein localises to the cytoplasm. It carries out the reaction tRNA(Glu) + L-glutamate + ATP = L-glutamyl-tRNA(Glu) + AMP + diphosphate. Functionally, catalyzes the attachment of glutamate to tRNA(Glu) in a two-step reaction: glutamate is first activated by ATP to form Glu-AMP and then transferred to the acceptor end of tRNA(Glu). The chain is Glutamate--tRNA ligase from Neisseria meningitidis serogroup C / serotype 2a (strain ATCC 700532 / DSM 15464 / FAM18).